A 54-amino-acid chain; its full sequence is Relaxin (54 aa).

A Pyrrolidone carboxylic acid modification is found at glutamine 1. 3 disulfide bridges follow: cysteine 10–cysteine 41, cysteine 22–cysteine 54, and cysteine 40–cysteine 45.

Belongs to the insulin family. As to quaternary structure, heterodimer of a B chain and an A chain linked by two disulfide bonds.

It localises to the secreted. Its function is as follows. Relaxin is an ovarian hormone that acts with estrogen to produce dilatation of the birth canal in many mammals. The chain is Relaxin from Balaenoptera acutorostrata (Common minke whale).